Reading from the N-terminus, the 235-residue chain is Purine nucleoside phosphorylase DeoD-type (235 aa).

His4 provides a ligand contact to a purine D-ribonucleoside. Residues Gly20, Arg24, Arg43, and 87–90 (RVGT) each bind phosphate. A purine D-ribonucleoside contacts are provided by residues Glu162, 179–181 (EME), and 203–204 (SD). The Proton donor role is filled by Asp204.

Belongs to the PNP/UDP phosphorylase family. As to quaternary structure, homohexamer; trimer of homodimers.

The enzyme catalyses a purine D-ribonucleoside + phosphate = a purine nucleobase + alpha-D-ribose 1-phosphate. The catalysed reaction is a purine 2'-deoxy-D-ribonucleoside + phosphate = a purine nucleobase + 2-deoxy-alpha-D-ribose 1-phosphate. Catalyzes the reversible phosphorolytic breakdown of the N-glycosidic bond in the beta-(deoxy)ribonucleoside molecules, with the formation of the corresponding free purine bases and pentose-1-phosphate. The polypeptide is Purine nucleoside phosphorylase DeoD-type (Bacillus cereus (strain ATCC 14579 / DSM 31 / CCUG 7414 / JCM 2152 / NBRC 15305 / NCIMB 9373 / NCTC 2599 / NRRL B-3711)).